The chain runs to 425 residues: Enolase (425 aa).

Gln162 contacts (2R)-2-phosphoglycerate. Catalysis depends on Glu204, which acts as the Proton donor. The Mg(2+) site is built by Asp241, Glu282, and Asp309. The (2R)-2-phosphoglycerate site is built by Lys334, Arg363, Ser364, and Lys385. The active-site Proton acceptor is Lys334.

This sequence belongs to the enolase family. Mg(2+) is required as a cofactor.

The protein localises to the cytoplasm. The protein resides in the secreted. It is found in the cell surface. The catalysed reaction is (2R)-2-phosphoglycerate = phosphoenolpyruvate + H2O. Its pathway is carbohydrate degradation; glycolysis; pyruvate from D-glyceraldehyde 3-phosphate: step 4/5. Functionally, catalyzes the reversible conversion of 2-phosphoglycerate (2-PG) into phosphoenolpyruvate (PEP). It is essential for the degradation of carbohydrates via glycolysis. The sequence is that of Enolase from Corynebacterium aurimucosum (strain ATCC 700975 / DSM 44827 / CIP 107346 / CN-1) (Corynebacterium nigricans).